A 452-amino-acid chain; its full sequence is Nuclear distribution protein nudF 2 (452 aa).

A coiled-coil region spans residues 76-101 (ALQILDLESKVAGLQAELSSLTLTSR). WD repeat units lie at residues 123-164 (SHRD…RTLK), 166-206 (HIRA…ANIR), 210-250 (GHDH…CVKV), 253-292 (SSDAWIRDISSSFDGKWLVAGGRDQAVTVWEVATAEQKSA), 295-355 (GHEN…IKTL), 357-396 (GHDNWVRDLVFHPNGKHLISVADDKTIRCWDLSQEGKLVK), and 401-449 (AHSH…SCVR).

This sequence belongs to the WD repeat LIS1/nudF family. Self-associates. Interacts with nudE and dynein.

The protein localises to the cytoplasm. The protein resides in the cytoskeleton. It is found in the spindle pole. Functionally, positively regulates the activity of the minus-end directed microtubule motor protein dynein. May enhance dynein-mediated microtubule sliding by targeting dynein to the microtubule plus end. Required for nuclear migration during vegetative growth as well as development. Required for retrograde early endosome (EE) transport from the hyphal tip. Required for localization of dynein to the mitotic spindle poles. Recruits additional proteins to the dynein complex at SPBs. This is Nuclear distribution protein nudF 2 from Talaromyces marneffei (strain ATCC 18224 / CBS 334.59 / QM 7333) (Penicillium marneffei).